Reading from the N-terminus, the 175-residue chain is ATP synthase subunit b (175 aa).

A helical transmembrane segment spans residues 20 to 40 (LIFWTAITFVIVLLILKKIAW).

This sequence belongs to the ATPase B chain family. In terms of assembly, F-type ATPases have 2 components, F(1) - the catalytic core - and F(0) - the membrane proton channel. F(1) has five subunits: alpha(3), beta(3), gamma(1), delta(1), epsilon(1). F(0) has four main subunits: a(1), b(2) and c(10-14). The alpha and beta chains form an alternating ring which encloses part of the gamma chain. F(1) is attached to F(0) by a central stalk formed by the gamma and epsilon chains, while a peripheral stalk is formed by the delta and b chains.

The protein localises to the cell inner membrane. In terms of biological role, f(1)F(0) ATP synthase produces ATP from ADP in the presence of a proton or sodium gradient. F-type ATPases consist of two structural domains, F(1) containing the extramembraneous catalytic core and F(0) containing the membrane proton channel, linked together by a central stalk and a peripheral stalk. During catalysis, ATP synthesis in the catalytic domain of F(1) is coupled via a rotary mechanism of the central stalk subunits to proton translocation. Its function is as follows. Component of the F(0) channel, it forms part of the peripheral stalk, linking F(1) to F(0). This Pelodictyon phaeoclathratiforme (strain DSM 5477 / BU-1) protein is ATP synthase subunit b.